We begin with the raw amino-acid sequence, 1104 residues long: Receptor-type guanylate cyclase gcy-15 (1104 aa).

At 1 to 431 (MEIAINRLNA…ENCGPPANNT (431 aa)) the chain is on the extracellular side. N-linked (GlcNAc...) asparagine glycans are attached at residues Asn43, Asn237, Asn263, Asn287, Asn407, and Asn429. Residues 432–452 (FIIVISVGVAVLIGLAIAAAF) traverse the membrane as a helical segment. Residues 453-1104 (LYKRYRYERR…QIQEKTYEFS (652 aa)) lie on the Cytoplasmic side of the membrane. The 296-residue stretch at 528-823 (FNTGSTARAG…QIKRKLKPLT (296 aa)) folds into the Protein kinase domain. ATP is bound by residues 534–542 (ARAGPFGPI) and Lys576. Residues 838–871 (IEKYTDKLEKDIAERNEELEAEKAKSEALLKMML) adopt a coiled-coil conformation. A Guanylate cyclase domain is found at 894–1024 (TVFFSDCPGF…DTVNTASRME (131 aa)).

The protein belongs to the adenylyl cyclase class-4/guanylyl cyclase family. As to expression, expressed bilaterally in ASG sensory neurons.

Its subcellular location is the cell membrane. The catalysed reaction is GTP = 3',5'-cyclic GMP + diphosphate. Functionally, guanylate cyclase involved in the production of the second messenger cGMP. This chain is Receptor-type guanylate cyclase gcy-15, found in Caenorhabditis elegans.